The following is a 352-amino-acid chain: Tropomodulin-3 (352 aa).

Phosphoserine is present on serine 25.

This sequence belongs to the tropomodulin family. As to quaternary structure, binds to the N-terminus of tropomyosin and to actin. Interacts with FLII. As to expression, ubiquitous.

The protein localises to the cytoplasm. It is found in the cytoskeleton. Functionally, blocks the elongation and depolymerization of the actin filaments at the pointed end. The Tmod/TM complex contributes to the formation of the short actin protofilament, which in turn defines the geometry of the membrane skeleton. This chain is Tropomodulin-3 (Tmod3), found in Mus musculus (Mouse).